The following is a 474-amino-acid chain: tRNA-2-methylthio-N(6)-dimethylallyladenosine synthase (474 aa).

The MTTase N-terminal domain occupies 3–120 (QKLHIKTWGC…LPEMINQIRG (118 aa)). [4Fe-4S] cluster is bound by residues cysteine 12, cysteine 49, cysteine 83, cysteine 157, cysteine 161, and cysteine 164. Residues 143–375 (RAEGPTAFVS…QQRINNQAAQ (233 aa)) enclose the Radical SAM core domain. One can recognise a TRAM domain in the interval 378 to 441 (RAMLGTEQRV…TNSLRGEVVR (64 aa)).

This sequence belongs to the methylthiotransferase family. MiaB subfamily. As to quaternary structure, monomer. It depends on [4Fe-4S] cluster as a cofactor.

The protein localises to the cytoplasm. It catalyses the reaction N(6)-dimethylallyladenosine(37) in tRNA + (sulfur carrier)-SH + AH2 + 2 S-adenosyl-L-methionine = 2-methylsulfanyl-N(6)-dimethylallyladenosine(37) in tRNA + (sulfur carrier)-H + 5'-deoxyadenosine + L-methionine + A + S-adenosyl-L-homocysteine + 2 H(+). Catalyzes the methylthiolation of N6-(dimethylallyl)adenosine (i(6)A), leading to the formation of 2-methylthio-N6-(dimethylallyl)adenosine (ms(2)i(6)A) at position 37 in tRNAs that read codons beginning with uridine. This is tRNA-2-methylthio-N(6)-dimethylallyladenosine synthase from Pasteurella multocida (strain Pm70).